The chain runs to 671 residues: MENIRFEVQLTILHVEGLWKNGLLRSLKPYLLISVDDDQFIKTNVASGTLRLSWGFTQKLTVSPQSIILLQLFDEKQKNETSDGFVGLGAAVVNSFLPFNNPKDDYKTRITLRSPSGSYRGSVVCLFKRSKFLPEELPADKSQICTDIIDDASGCAWETRIDEFGHVYYLKSPQLSVISAISHEKLENLTPKQLKEVFSQFLFNNQSKSSLKINLEYKVIKHLLEHYPLALSVRQQVAVEKGPLPAGWEMRLSEDYHVYFVDHSTKTTTWSDPRDNVVASDSVSENTDSIQQINDEYQRKIAYMYDRPEMAVNDAQLQLKVSRATTFEDAYDIISKLSVSDMKKKLLIRFRNEDGLDYGGVSREFFYILSHAIFNPGYSLFEYATDDNYGLQISPLSSVNPDFRSYFRFVGRVMGLAIYHRRYLDVQFVLPFYKRILQKPLCLEDVKDVDEVYYESLKWIKNNDVDESLCLNFSVEENRFGESVTVDLIPNGRNIAVNNQNKMNYLKALTEHKLVTSTEEQFNALKGGLNELIPDSVLQIFNENELDTLLNGKRDIDVQDWKRFTDYRSYTETDDIVIWFWELLSEWSPEKKAKLLQFATGTSRLPLSGFKDMHGSDGPRKFTIEKVGHISQLPKAHTCFNRLDIPPYNSKEELEQKLTIAIQETAGFGTE.

The 112-residue stretch at 1-112 (MENIRFEVQL…KDDYKTRITL (112 aa)) folds into the C2 domain. Residues 242–275 (GPLPAGWEMRLSEDYHVYFVDHSTKTTTWSDPRD) form the WW domain. One can recognise an HECT domain in the interval 338-671 (SVSDMKKKLL…IQETAGFGTE (334 aa)). Cys-639 (glycyl thioester intermediate) is an active-site residue.

In terms of assembly, interacts with the E2 ubiquitin-conjugating enzyme ubc4.

Its subcellular location is the membrane. The protein localises to the cytoplasm. The catalysed reaction is S-ubiquitinyl-[E2 ubiquitin-conjugating enzyme]-L-cysteine + [acceptor protein]-L-lysine = [E2 ubiquitin-conjugating enzyme]-L-cysteine + N(6)-ubiquitinyl-[acceptor protein]-L-lysine.. Its pathway is protein modification; protein ubiquitination. In terms of biological role, E3 ubiquitin-protein ligase which accepts ubiquitin from an E2 ubiquitin-conjugating enzyme in the form of a thioester and then directly transfers the ubiquitin to targeted substrates. This is E3 ubiquitin-protein ligase pub2 (pub2) from Schizosaccharomyces pombe (strain 972 / ATCC 24843) (Fission yeast).